A 127-amino-acid polypeptide reads, in one-letter code: Small ribosomal subunit protein bS6 (127 aa).

This sequence belongs to the bacterial ribosomal protein bS6 family.

In terms of biological role, binds together with bS18 to 16S ribosomal RNA. The polypeptide is Small ribosomal subunit protein bS6 (Sulfurovum sp. (strain NBC37-1)).